The following is a 234-amino-acid chain: Glutamine synthetase (234 aa).

One can recognise a GS catalytic domain in the interval 1–234 (KAQEPWFGIE…TRLLVETTLL (234 aa)). The tract at residues 126–157 (GSGGHVNFSNRQPESPPAGKQSRSSAKKLGKR) is disordered.

It belongs to the glutamine synthetase family. As to quaternary structure, homooctamer.

Its subcellular location is the cytoplasm. It carries out the reaction L-glutamate + NH4(+) + ATP = L-glutamine + ADP + phosphate + H(+). The chain is Glutamine synthetase from Dunaliella salina (Green alga).